The following is a 127-amino-acid chain: Aspartate 1-decarboxylase (127 aa).

Ser-25 functions as the Schiff-base intermediate with substrate; via pyruvic acid in the catalytic mechanism. At Ser-25 the chain carries Pyruvic acid (Ser). Thr-57 contacts substrate. Tyr-58 functions as the Proton donor in the catalytic mechanism. 73 to 75 (GAA) lines the substrate pocket.

It belongs to the PanD family. In terms of assembly, heterooctamer of four alpha and four beta subunits. The cofactor is pyruvate. Is synthesized initially as an inactive proenzyme, which is activated by self-cleavage at a specific serine bond to produce a beta-subunit with a hydroxyl group at its C-terminus and an alpha-subunit with a pyruvoyl group at its N-terminus.

The protein resides in the cytoplasm. The catalysed reaction is L-aspartate + H(+) = beta-alanine + CO2. Its pathway is cofactor biosynthesis; (R)-pantothenate biosynthesis; beta-alanine from L-aspartate: step 1/1. Its function is as follows. Catalyzes the pyruvoyl-dependent decarboxylation of aspartate to produce beta-alanine. This is Aspartate 1-decarboxylase from Geobacillus sp. (strain WCH70).